Here is a 954-residue protein sequence, read N- to C-terminus: Glycine dehydrogenase (decarboxylating) (954 aa).

The residue at position 699 (lysine 699) is an N6-(pyridoxal phosphate)lysine.

The protein belongs to the GcvP family. As to quaternary structure, the glycine cleavage system is composed of four proteins: P, T, L and H. Requires pyridoxal 5'-phosphate as cofactor.

It carries out the reaction N(6)-[(R)-lipoyl]-L-lysyl-[glycine-cleavage complex H protein] + glycine + H(+) = N(6)-[(R)-S(8)-aminomethyldihydrolipoyl]-L-lysyl-[glycine-cleavage complex H protein] + CO2. Its function is as follows. The glycine cleavage system catalyzes the degradation of glycine. The P protein binds the alpha-amino group of glycine through its pyridoxal phosphate cofactor; CO(2) is released and the remaining methylamine moiety is then transferred to the lipoamide cofactor of the H protein. In Nitrobacter winogradskyi (strain ATCC 25391 / DSM 10237 / CIP 104748 / NCIMB 11846 / Nb-255), this protein is Glycine dehydrogenase (decarboxylating).